Consider the following 124-residue polypeptide: Non-structural protein 2 (124 aa).

Positions 121–124 (DLNP) match the DLNP; interaction with MAP1B motif.

The protein belongs to the pneumovirus non-structural protein 2 family. As to quaternary structure, monomer (instable). Homomultimer. Heteromultimer with NS1. Interacts with host RIGI (via N-terminus); this interaction prevents host signaling pathway involved in interferon production. Interacts with host MAP1B/microtubule-associated protein 1B.

The protein resides in the host mitochondrion. Functionally, plays a major role in antagonizing the type I IFN-mediated antiviral response. Acts cooperatively with NS1 to repress activation and nuclear translocation of host IFN-regulatory factor IRF3. Interacts with the host cytoplasmic sensor of viral nucleic acids RIGI and prevents the interaction with its downstream partner MAVS. Together with NS2, participates in the proteasomal degradation of host STAT2, IRF3, IRF7, TBK1 and RIGI through a NS-degradasome involving CUL2 and Elongin-C. The degradasome requires an intact mitochondrial MAVS. Induces host SOCS1 expression. Induces activation of NF-kappa-B. Suppresses premature apoptosis by an NF-kappa-B-dependent, interferon-independent mechanism promoting continued viral replication. This chain is Non-structural protein 2 (1B), found in Human respiratory syncytial virus B (strain 18537).